Consider the following 675-residue polypeptide: MNRFFNRELSWLAFNTRVLNEAKDESLPLLERLKFLAIYDTNLDEFYMIRVAGLKQLYEHKIASKGIDGASPEEQLEKIKHYLAHEIEERELEFQKIQALLFKKGLCITPYNELNLEQKAKAKTYFKEQLYALVLPFKLDSSHTFPPLANLTFALFAHIKDKETQSASYALIKLPSFIFRFVELEKGLFALAEEIVEAHLEELFLEHEILDCMAFRVTCDADIAITEDEAHDYADLMSKSLRKRNQGEIVRLQTQKGSQELLKTLLASLRSFQTHSYKKHKLTGMHIYKSAIMLNLGDLWELVNHSDFKALKSPNFTPKIHPHFNENDLFKSIEKQDLLLFHPYESFEPVIDLIEQAASDPTTLSIKMTLYRVGKHSPIVKALIEAASKIQVSVLVELKARFDEESNLHWAKALERAGALVVYGVFKLKVHAKMLVITKKTDNQLRHFTHLSTGNYNPLSAKIYTDVSFFSAKNEIANDIIKLFHSLLTSSATSNTLETLFMAPKQIKPKIIELIQNEMNHKQEGYIILKANALVDSEIIEWLYQASQKGVKIDLIIRGICCLKPQVKGLSENIRVYSIVGKYLEHARIYYFKHENIYFSSADLMPRNLERRVELLIPATNPKIANKLLHILEIQLKDTLKRYELNSKGRYAKISNPNDPLNSQDYFEKQALKTL.

Asn-42 serves as a coordination point for ATP. Residues Arg-372 and Arg-401 each contribute to the Mg(2+) site. Catalysis depends on His-431, which acts as the Phosphohistidine intermediate. ATP is bound by residues Tyr-464, Arg-558, and His-586.

Belongs to the polyphosphate kinase 1 (PPK1) family. It depends on Mg(2+) as a cofactor. An intermediate of this reaction is the autophosphorylated ppk in which a phosphate is covalently linked to a histidine residue through a N-P bond.

The catalysed reaction is [phosphate](n) + ATP = [phosphate](n+1) + ADP. Its function is as follows. Catalyzes the reversible transfer of the terminal phosphate of ATP to form a long-chain polyphosphate (polyP). In Helicobacter pylori (strain J99 / ATCC 700824) (Campylobacter pylori J99), this protein is Polyphosphate kinase.